A 176-amino-acid polypeptide reads, in one-letter code: 4-hydroxylaminobenzoate lyase (176 aa).

This sequence belongs to the PnbB family.

It catalyses the reaction 4-hydroxylaminobenzoate + H2O + H(+) = 3,4-dihydroxybenzoate + NH4(+). Lyase involved in the degradation of nitroaromatic compounds. Catalyzes the conversion of 4-hydroxylaminobenzoate to 3,4-dihydroxybenzoate (protocatechuate). Required for the catabolism of 4-nitrotoluene. This Pseudomonas putida (Arthrobacter siderocapsulatus) protein is 4-hydroxylaminobenzoate lyase.